The following is a 304-amino-acid chain: MSWIERIKSNITPTRKASIPEGVWTKCDSCGQVLYRAELERNLEVCPKCDHHMRMTARNRLHSLLDEGSLVELGSELEPKDVLKFRDSKKYKDRLASAQKETGEKDALVVMKGTLYGMPVVAAAFEFAFMGGSMGSVVGARFVRAVEQALEDNCPLICFSASGGARMQEALMSLMQMAKTSAALAKMQERGLPYISVLTDPTMGGVSASFAMLGDLNIAEPKALIGFAGPRVIEQTVREKLPPGFQRSEFLIEKGAIDMIIRRPEMRLKLASILAKLMNLPAPNPEAPREGVVVPPVPDQEPEA.

The CoA carboxyltransferase N-terminal domain maps to 23–292 (VWTKCDSCGQ…PNPEAPREGV (270 aa)). Zn(2+) is bound by residues Cys27, Cys30, Cys46, and Cys49. Residues 27 to 49 (CDSCGQVLYRAELERNLEVCPKC) form a C4-type zinc finger. Residues 284–304 (NPEAPREGVVVPPVPDQEPEA) are disordered. A compositionally biased stretch (pro residues) spans 295-304 (PPVPDQEPEA).

It belongs to the AccD/PCCB family. As to quaternary structure, acetyl-CoA carboxylase is a heterohexamer composed of biotin carboxyl carrier protein (AccB), biotin carboxylase (AccC) and two subunits each of ACCase subunit alpha (AccA) and ACCase subunit beta (AccD). The cofactor is Zn(2+).

Its subcellular location is the cytoplasm. It carries out the reaction N(6)-carboxybiotinyl-L-lysyl-[protein] + acetyl-CoA = N(6)-biotinyl-L-lysyl-[protein] + malonyl-CoA. It participates in lipid metabolism; malonyl-CoA biosynthesis; malonyl-CoA from acetyl-CoA: step 1/1. Its function is as follows. Component of the acetyl coenzyme A carboxylase (ACC) complex. Biotin carboxylase (BC) catalyzes the carboxylation of biotin on its carrier protein (BCCP) and then the CO(2) group is transferred by the transcarboxylase to acetyl-CoA to form malonyl-CoA. The sequence is that of Acetyl-coenzyme A carboxylase carboxyl transferase subunit beta from Escherichia coli O6:K15:H31 (strain 536 / UPEC).